The primary structure comprises 127 residues: Phosphoribosyl-ATP pyrophosphatase (127 aa).

Belongs to the PRA-PH family.

Its subcellular location is the cytoplasm. The enzyme catalyses 1-(5-phospho-beta-D-ribosyl)-ATP + H2O = 1-(5-phospho-beta-D-ribosyl)-5'-AMP + diphosphate + H(+). Its pathway is amino-acid biosynthesis; L-histidine biosynthesis; L-histidine from 5-phospho-alpha-D-ribose 1-diphosphate: step 2/9. The sequence is that of Phosphoribosyl-ATP pyrophosphatase from Polaromonas sp. (strain JS666 / ATCC BAA-500).